Here is a 125-residue protein sequence, read N- to C-terminus: Phosphoribosyl-AMP cyclohydrolase (125 aa).

Aspartate 74 provides a ligand contact to Mg(2+). Cysteine 75 is a binding site for Zn(2+). Aspartate 76 and aspartate 78 together coordinate Mg(2+). 2 residues coordinate Zn(2+): cysteine 92 and cysteine 99.

It belongs to the PRA-CH family. Homodimer. It depends on Mg(2+) as a cofactor. Zn(2+) is required as a cofactor.

The protein localises to the cytoplasm. The catalysed reaction is 1-(5-phospho-beta-D-ribosyl)-5'-AMP + H2O = 1-(5-phospho-beta-D-ribosyl)-5-[(5-phospho-beta-D-ribosylamino)methylideneamino]imidazole-4-carboxamide. The protein operates within amino-acid biosynthesis; L-histidine biosynthesis; L-histidine from 5-phospho-alpha-D-ribose 1-diphosphate: step 3/9. Its function is as follows. Catalyzes the hydrolysis of the adenine ring of phosphoribosyl-AMP. The polypeptide is Phosphoribosyl-AMP cyclohydrolase (Desulforapulum autotrophicum (strain ATCC 43914 / DSM 3382 / VKM B-1955 / HRM2) (Desulfobacterium autotrophicum)).